We begin with the raw amino-acid sequence, 3066 residues long: MATIMFGSIAAEIPVIKEAIMIAMPKSKHTLHVVQVEAKHMATEIRSERGKLYVAKRFADNAIKAYDSQLKAFDELLKKNSDLQKRLFIGQNSPIKQKKGGACFVRSLSFKQAEERHAKYLKLQEEEHQFLSGAYGDKAYVGSVQGTLDRKVAEKVSFKSPYYKRTCKAVRQVKVLKKAVGSGKVLDQVLEIVAETGVPVTFVGKGANKTLRAQYVRRYGLVIPKIFLCHESGRKVHREMSYWHHKETLQYLCKHGKYGALNENALCKGDSGLLFDQRTAFVKRVTYLPHFIVRGRQEGQLVCATEYLDNVYTIEHYTHKPEEQFFKGWKQVFDKMAPHTFEHDCTIDYNNEQCGELAATICQTLFPVRKLSCNKCRHRIKDLSWEEFKQFILAHLGCCAKLWEEQKNLPGLEKIHSFVVQATSENMIFETSMEIVRLTQNYTSTHMLQIQDINKALMKGSSATQEDLKKASEQLLAMTRWWKNHMTLTNEDALKTFRNKRSSKALINPSLLCDNQLDRNGNFVWGERGRHSKRFFENFFEEVVPSEGYKKYVIRNNPNGFRKLAIDSLIVPMDLARARIALQGESIKREDLTLACVSKQDGNFVYPCCCVTQDDGRPFYSELKSPTKRHLVVGTSGDPKYIDLPATDSDRMYIAKEGYCYLNIFLAMLVNVNEDEAKDFTKMVRDVVVPKLGTWPSMMDVATAVYIMTVFHPETRSAELPRILVDHASQTMHVIDSFGSLSVGYHVLKAGTVNQLIQFASNDLEGEMKHYRVGGDAEQRMRCERALISSIFKPKKMMQILENDPYTLVLGLVSPTVLIHMFRMKHFEKGVELWINKDQSVVKIFLLLEHLTRKIAMNDVLLEQLEMISQQAGRLHEIICDCPKNIHSYRAVKDFLEVKMEAALTNKELANNGFFDINESLGHVSEKIYAKALEKEWRALSWLEKSSVTWQLKKFSKVTEEHLTKKAAEGRKESSRKFVSACFMNAQTHLGNARITISNKVNEVTNLGVRRIVEMCLRLIHRCYSDMIFLVNISIIFSLFVQMCATLRNTLSIIHRDRTTLARVQAESNERSIMQMYDLMTKAGNGPPKMEDFFKHIEMVRPDLLPTAKYMVQDSEAVDTQAKTQTQLQLEKIVAFMALLTMCIDSERSDAVFKILQKLKSVFGTMGEDVRPQSLDDILDLDEAKQLTVDFDLSTSKESTSTSFDVTFEDWWNRQLQQNRVIPHYRTSGEFLEFTRETAAKVANTITLSTSTEFLIRGAVGSGKSTGLPHHLSKKGKVLLLEPTRPLAENVSKQLGRDPFFHAVTLRMRGLNRFGSSNITVMTSGFAFHYYVNNPHQLSDFDFIIIDECHVLDSATIAFNCALKEFEFPGKLLKVSATPPGRECEFTTQHPVKLKVEEHLSFQQFAQAQGTGSNADMVQYGHNLLVYVASYNEVDQMSRHLLDRQFHVTKVDGRTMQMGNIEIETHGTEGKPHFIVATNIIENGVTLDVDCVIDFGLKVVAQLDSDNRCVRYEKKAVSFGERIQRLGRVGRHKAGFALRIGHTEKSLEEIPEFIATEAAFLSFAYGLPVTTQGVSTNILSRCTVKQARNALNFELTPFFTTNFIRYDGSIHPEVHKLLCKFKLRESEMLLSKLAIPHQYTSQWITVKDYNRIGIQVNCDEKVKIPFYVHGIPDKLFEMLWNTVCKYKCDAGFGRISSVNATKISYTLSTDPSALPRTIAILDHLISEEIMKKNHFDTISSSLTGHSFSLAGIADGIRKRYLKDYTQQNIAILQQARAQLLEFNSNTVDLNNLQNYEDLGVLNTVRLQGKAEVCEFLGLKGKWDGKKFFNDVVVAIFTLIGGGWMLWDYFRHYMQEPVSTQGRKRMMQKLKFRDAFDRKVGREVYADDYTMEHTFGEAYTKKGKQKGSTHTKGMGKKSRGFIHMYGVEPENYSTLRFVDPLTGHTMDESPRVDIRIVQDEFGEIRRQKINEGELDKQAVVARPGLQAYFLGKGTEEALKVDLTPHRPTLLCMNSNAIAGFPEREDELRQTVPMSAVPKPNEVVELESKSTYKGLRDYSSVSTLICRLVNSSDGHNETIYGIGYGSYIITNGHLFRRNNGTLTVKTWHGDFIIPNTTQLKIHFIEGKDAILIRMPRDFPPFAQRSCFRSPKKEERVCMVGTNFQEKSLRSTVSESSIIVPEGKGSFWVHWITTQDGDCGLPMVSVNDGYIVGIHGLTSNETSRNFFVPFIDEFKNKYLDKLEDLTWNKHWLWQPDRIAWGSLNLVDDQPKSEFKISKLVTDLFGSEVSVQSKKDRWVLEAVEGNLVACGQAESALVTKHVVKGKCCHFAQYLSLHPDAQAFFKPLMSAYQPSKLNKEAFKKDFFKYNKPVMLNEVNFEAFEKAVEGVKIMMIEFGFNECVYVTDPDDIYDSLNMKAAVGAQYKGKKQDYFQDMDSFDKERLLFLSCERLFYGQKGIWNGSLKAELRPLEKVQANKTRTFTAAPIDTLLGAKVCVDDFNNQFYSFNLICPWTVGMTKFYGGWDKLMRALPDGWVYCHADGSQFDSSLTPLLLNSVLSIRSFFMEDWWVGKEMLENLYAEIVYTPILTPDGTIFKKFRGNNSGQPSTVVDNTLMVVISMYYSCIKEGWTYDDIQERLVFFANGDDIILAVQKEDVWLYNTLSNSFKELGLNYDFSEQTTKREELWFMSHQAMLIDDIYIPKLEQERIVSILEWDRSKELMHRTEAICAAMIEAWGHTELLTEIRKFYLWLMGKEEFKELALNGKAPYIAETALRKLYTDKDAKMEEMQEYLKQLEFDSDDEVYESVSTQSSKKEEEKDAGADEREKDKGKGPADKDVGAGSKGKVVPRLQKITKKMNLPMVGGRMILNLDHLIEYKPQQTDLYNTRATKAQFERWYEAVKTEYELNDQQMGVVMNGFMVWCIDNGTSPDVNGVWVMMDGDEQIEYPLKPMVENAKPTLRQVMHHFSDAAEAYIEMRNSEGFYMPRYGLLRNLRDKSLARYAFDFYEVNSKTSDRAREAVAQMKAARLANVNTRLFGLDGNVATTSENTERHTARDVNQNMHHLLGMTSGQ.

One can recognise a Peptidase S30 domain in the interval 176-317; it reads LKKAVGSGKV…LDNVYTIEHY (142 aa). Catalysis depends on for P1 proteinase activity residues H230, E239, and S271. The short motif at 370-373 is the Involved in interaction with stylet and aphid transmission element; the sequence is KLSC. Positions 626-628 match the Involved in virions binding and aphid transmission motif; that stretch reads PTK. The Peptidase C6 domain maps to 652–774; the sequence is MYIAKEGYCY…EGEMKHYRVG (123 aa). Catalysis depends on for helper component proteinase activity residues C660 and H733. One can recognise a Helicase ATP-binding domain in the interval 1245 to 1397; the sequence is TITLSTSTEF…TQHPVKLKVE (153 aa). An ATP-binding site is contributed by 1258–1265; it reads GAVGSGKS. A DECH box motif is present at residues 1347–1350; sequence DECH. The region spanning 1416-1575 is the Helicase C-terminal domain; it reads DMVQYGHNLL…GLPVTTQGVS (160 aa). The Nuclear localization signal signature appears at 1900 to 1909; it reads KKGKQKGSTH. An O-(5'-phospho-RNA)-tyrosine modification is found at Y1924. The Peptidase C4 domain occupies 2046–2264; it reads SKSTYKGLRD…IAWGSLNLVD (219 aa). Residues H2091, D2126, and C2196 each act as for nuclear inclusion protein A activity in the active site. The region spanning 2530–2654 is the RdRp catalytic domain; the sequence is WVYCHADGSQ…AVQKEDVWLY (125 aa). Positions 2797 to 2839 are disordered; the sequence is EVYESVSTQSSKKEEEKDAGADEREKDKGKGPADKDVGAGSKG. Basic and acidic residues predominate over residues 2807–2833; it reads SKKEEEKDAGADEREKDKGKGPADKDV. T3048 bears the Phosphothreonine mark.

Belongs to the potyviridae genome polyprotein family. Interacts with host eIF4E protein (via cap-binding region); this interaction mediates the translation of the VPg-viral RNA conjugates. Part of a complex that comprises VPg, RNA, host EIF4E and EIF4G; this interaction mediates the translation of the VPg-viral RNA conjugates. Post-translationally, VPg is uridylylated by the polymerase and is covalently attached to the 5'-end of the genomic RNA. This uridylylated form acts as a nucleotide-peptide primer for the polymerase. Genome polyprotein of potyviruses undergoes post-translational proteolytic processing by the main proteinase NIa-pro resulting in the production of at least ten individual proteins. The P1 proteinase and the HC-pro cleave only their respective C-termini autocatalytically. 6K1 is essential for proper proteolytic separation of P3 from CI.

It localises to the host cytoplasmic vesicle. The protein resides in the host nucleus. Its subcellular location is the virion. It catalyses the reaction RNA(n) + a ribonucleoside 5'-triphosphate = RNA(n+1) + diphosphate. The enzyme catalyses Hydrolyzes glutaminyl bonds, and activity is further restricted by preferences for the amino acids in P6 - P1' that vary with the species of potyvirus, e.g. Glu-Xaa-Xaa-Tyr-Xaa-Gln-|-(Ser or Gly) for the enzyme from tobacco etch virus. The natural substrate is the viral polyprotein, but other proteins and oligopeptides containing the appropriate consensus sequence are also cleaved.. It carries out the reaction Hydrolyzes a Gly-|-Gly bond at its own C-terminus, commonly in the sequence -Tyr-Xaa-Val-Gly-|-Gly, in the processing of the potyviral polyprotein.. Its function is as follows. Required for aphid transmission and also has proteolytic activity. Only cleaves a Gly-Gly dipeptide at its own C-terminus. Interacts with virions and aphid stylets. Acts as a suppressor of RNA-mediated gene silencing, also known as post-transcriptional gene silencing (PTGS), a mechanism of plant viral defense that limits the accumulation of viral RNAs. May have RNA-binding activity. Functionally, has helicase activity. It may be involved in replication. Indispensable for virus replication. Reduces the abundance of host transcripts related to jasmonic acid biosynthesis therefore altering the host defenses. In order to increase its own stability, decreases host protein degradation pathways. In terms of biological role, indispensable for virus replication. Its function is as follows. Mediates the cap-independent, EIF4E-dependent translation of viral genomic RNAs. Binds to the cap-binding site of host EIF4E and thus interferes with the host EIF4E-dependent mRNA export and translation. VPg-RNA directly binds EIF4E and is a template for transcription. Also forms trimeric complexes with EIF4E-EIF4G, which are templates for translation. Functionally, has RNA-binding and proteolytic activities. An RNA-dependent RNA polymerase that plays an essential role in the virus replication. In terms of biological role, involved in aphid transmission, cell-to-cell and systemis movement, encapsidation of the viral RNA and in the regulation of viral RNA amplification. This Bean common mosaic necrosis virus (strain NL-3) (BCMNV) protein is Genome polyprotein.